The primary structure comprises 1033 residues: MSGSFWKFGQDYSIESPVSKILNSAFIKINKDQDDDVPTGTCEENIADDEDNSSHDYAASEDNVVNENEEKEEENTLPTTESEYENYRPNLDVLDDLLDDDELYTELMCSNFKLLIFLKYPEVLSKLIEYVTNEKILDEETDSAKKPEIIEGVNDHPILIERDRKDKKEDAEEGGDSEETTNDSDHDSGDERSVDSEETSITLPPESEEQVETRRARIAAEILSADVWPISAAIMQNKDLLGRLWSILDHPAPLPIPASTYFMKINERLLDMDITGMLEFILSRDSLVARFLTHVDNPSLMDFLLKVISTDKPDSPTGVIKILKSQELIPKLLDHLNPEYGISTQSAAGDFIKAFVTLSTNSSNELASGIGPNELTRQLVSEEMIEKLIKIMLKGGTSLSNGVGIIIELIRKNNSDYDFIQLVYTTLESHPPTDRDPIHLIHLVKLFAKHMPDFADMLDKTKLPLMEMPFGNIEPLGFERFKICELIAELLHCSNMTLLNEPNGEMIAQERDIERAKELETSTEKENITFIVDNKSSYYDKDCVEKDITENLGALQINNQGSEEDELNDTGVSSVKLDVKSDAKVVEGLENDASGVELYDETLSDTESVRECLREKPLVGDRLKIALEDTKILISILDMFTEFPWNNFLHNVIFDIAQQIFNGPLKTGYNRFLLKDYLVDAYLTKKIVDADKACQDYEKKTGLRYGYMGHLTLVAEEISKFKEYIDEMKLTFCNTAVSDRLEEPFWKEYSETILADTREKYNTVLGDFGNDQESDDDVIRNSDSEDIIGDTEGNENYGNGENDELLSNGHDSGNMDLYYNFNNNENEENEEDYAEYSDVDNKNYYNNVETNDDDYDSDDGKSKSAESEFTDKISEHRDGNSLYNEDNDENGSDKWTSGTSLFPPDHFPSRSQPSDPKLQDQNIFHHQFDFEGVGDDDDYMDPNDDGQSYARPGNPLYTTPKTPPRPKTILFNSLSALDNNGEDEEVALGTSVDDRMDNEISSDEEDSEDEDEENDMGNEEGYSLYRSRSKEAF.

Disordered stretches follow at residues 32 to 82 (DQDD…TTES), 147 to 213 (PEII…QVET), 768 to 813 (FGND…HDSG), and 828 to 1033 (ENEE…KEAF). Over residues 158–170 (ILIERDRKDKKED) the composition is skewed to basic and acidic residues. Residues 171 to 182 (AEEGGDSEETTN) are compositionally biased toward acidic residues. Residues 183 to 195 (DSDHDSGDERSVD) are compositionally biased toward basic and acidic residues. Residue Ser774 is modified to Phosphoserine. Composition is skewed to acidic residues over residues 784 to 793 (SEDIIGDTEG) and 828 to 838 (ENEEDYAEYSD). Phosphoserine is present on residues Ser857, Ser862, and Ser892. Basic and acidic residues predominate over residues 858-879 (DDGKSKSAESEFTDKISEHRDG). Residues 909-924 (SRSQPSDPKLQDQNIF) show a composition bias toward polar residues. A compositionally biased stretch (acidic residues) spans 932–944 (GVGDDDDYMDPND). Thr990 is modified (phosphothreonine). Residue Ser991 is modified to Phosphoserine. Acidic residues predominate over residues 1000–1018 (ISSDEEDSEDEDEENDMGN).

The protein belongs to the SAPS family. As to quaternary structure, associates with the SIT4 protein phosphatase catalytic subunit in a cell-cycle-dependent manner. Post-translationally, hyperphosphorylated in the absence of SIT4.

Its subcellular location is the cytoplasm. In terms of biological role, positive regulator of protein phosphatase SIT4. Involved in the general amino acid control (GAAC) response regulated by TOR. Involved in the dephosphorylation of the elongator complex subunit IKI3. This chain is SIT4-associating protein SAP190 (SAP190), found in Saccharomyces cerevisiae (strain AWRI1631) (Baker's yeast).